The sequence spans 184 residues: Cytidylate kinase (184 aa).

8–16 (GQPGSGKTT) lines the ATP pocket.

The protein belongs to the cytidylate kinase family. Type 2 subfamily.

The protein localises to the cytoplasm. The enzyme catalyses CMP + ATP = CDP + ADP. It carries out the reaction dCMP + ATP = dCDP + ADP. The polypeptide is Cytidylate kinase (Pyrobaculum arsenaticum (strain DSM 13514 / JCM 11321 / PZ6)).